The primary structure comprises 450 residues: MFS-type transporter avaK (450 aa).

Transmembrane regions (helical) follow at residues 18 to 38 (VMAL…LSMP), 100 to 120 (RVVC…SGLL), 148 to 168 (AVAL…AAPA), 171 to 191 (ALVA…MLFV), 244 to 264 (APII…HFLL), 280 to 300 (LVLV…MPAA), 329 to 349 (FGFF…ALAF), and 408 to 428 (GWLG…LVAV).

It belongs to the major facilitator superfamily.

The protein localises to the membrane. Its pathway is secondary metabolite biosynthesis. Its function is as follows. MFS-type transporter; part of the cluster that mediates the biosynthesis of a highly modified cyclo-arginine-tryptophan dipeptide (cRW). The sequence is that of MFS-type transporter avaK from Aspergillus versicolor.